The following is a 234-amino-acid chain: Leucyl/phenylalanyl-tRNA--protein transferase (234 aa).

The protein belongs to the L/F-transferase family.

The protein resides in the cytoplasm. The catalysed reaction is N-terminal L-lysyl-[protein] + L-leucyl-tRNA(Leu) = N-terminal L-leucyl-L-lysyl-[protein] + tRNA(Leu) + H(+). It carries out the reaction N-terminal L-arginyl-[protein] + L-leucyl-tRNA(Leu) = N-terminal L-leucyl-L-arginyl-[protein] + tRNA(Leu) + H(+). The enzyme catalyses L-phenylalanyl-tRNA(Phe) + an N-terminal L-alpha-aminoacyl-[protein] = an N-terminal L-phenylalanyl-L-alpha-aminoacyl-[protein] + tRNA(Phe). Functionally, functions in the N-end rule pathway of protein degradation where it conjugates Leu, Phe and, less efficiently, Met from aminoacyl-tRNAs to the N-termini of proteins containing an N-terminal arginine or lysine. The sequence is that of Leucyl/phenylalanyl-tRNA--protein transferase from Escherichia coli O81 (strain ED1a).